Reading from the N-terminus, the 373-residue chain is 3 beta-hydroxysteroid dehydrogenase/Delta 5--&gt;4-isomerase (373 aa).

Y155 functions as the Proton acceptor in the catalytic mechanism. Residue K159 participates in NAD(+) binding. The helical transmembrane segment at 288 to 308 threads the bilayer; the sequence is IFLKYWLAFLLEIVSFLLSPI.

Belongs to the 3-beta-HSD family.

The protein localises to the endoplasmic reticulum membrane. It is found in the mitochondrion membrane. It carries out the reaction a 3beta-hydroxy-Delta(5)-steroid + NAD(+) = a 3-oxo-Delta(5)-steroid + NADH + H(+). The enzyme catalyses a 3-oxo-Delta(5)-steroid = a 3-oxo-Delta(4)-steroid. It participates in lipid metabolism; steroid biosynthesis. Functionally, 3-beta-HSD is a bifunctional enzyme, that catalyzes the oxidative conversion of Delta(5)-ene-3-beta-hydroxy steroid, and the oxidative conversion of ketosteroids. The 3-beta-HSD enzymatic system plays a crucial role in the biosynthesis of all classes of hormonal steroids. The sequence is that of 3 beta-hydroxysteroid dehydrogenase/Delta 5--&gt;4-isomerase (HSD3B) from Equus caballus (Horse).